Consider the following 1173-residue polypeptide: WASH complex subunit 4 (1173 aa).

A2 carries the N-acetylalanine modification. A Phosphoserine modification is found at S7. Residues 27–56 adopt a coiled-coil conformation; it reads QLKNYGRFLEEYTSQLRRIEDALDDLIGDV. The interval 705-1173 is sufficient for interaction with WASHC5; the sequence is KDLALFFSLN…STVSADPVVK (469 aa). Residues 1141–1155 are compositionally biased toward basic and acidic residues; it reads AEENQEKKEKEEETK. The tract at residues 1141–1173 is disordered; the sequence is AEENQEKKEKEEETKTSNGDGPESTVSADPVVK. T1154 carries the post-translational modification Phosphothreonine.

It belongs to the SWIP family. In terms of assembly, component of the WASH core complex also described as WASH regulatory complex (SHRC) composed of WASH (WASHC1, WASH2P or WASH3P), WASHC2 (WASHC2A or WASHC2C), WASHC3, WASHC4 and WASHC5. The WASH core complex associates via WASHC2 with the F-actin-capping protein dimer (formed by CAPZA1, CAPZA2 or CAPZA3 and CAPZB) in a transient or substoichiometric manner which was initially described as WASH complex.

The protein resides in the early endosome. Acts as a component of the WASH core complex that functions as a nucleation-promoting factor (NPF) at the surface of endosomes, where it recruits and activates the Arp2/3 complex to induce actin polymerization, playing a key role in the fission of tubules that serve as transport intermediates during endosome sorting. This Mus musculus (Mouse) protein is WASH complex subunit 4.